Here is a 147-residue protein sequence, read N- to C-terminus: Hemoglobin subunit beta (147 aa).

An N-acetylvaline modification is found at valine 2. The region spanning 3–147 (HLSGEEKSAV…VANALAHKYH (145 aa)) is the Globin domain. At threonine 13 the chain carries Phosphothreonine. Serine 45 carries the phosphoserine modification. Lysine 60 bears the N6-acetyllysine mark. A heme b-binding site is contributed by histidine 64. Lysine 83 is modified (N6-acetyllysine). A heme b-binding site is contributed by histidine 93. Position 94 is an S-nitrosocysteine (cysteine 94). N6-acetyllysine is present on lysine 145.

It belongs to the globin family. As to quaternary structure, heterotetramer of two alpha chains and two beta chains. As to expression, red blood cells.

Involved in oxygen transport from the lung to the various peripheral tissues. The chain is Hemoglobin subunit beta (HBB) from Lepus europaeus (European hare).